Consider the following 465-residue polypeptide: uncharacterized protein (465 aa).

The next 11 membrane-spanning stretches (helical) occupy residues 19–39 (VLGP…GEYM), 50–70 (MIAG…VAMI), 91–111 (IVGP…YTML), 140–160 (FIVL…LATL), 164–184 (LVIT…VQFG), 201–221 (PYGW…YLGI), 244–264 (AGIM…SGLM), 288–308 (LMVL…NGCI), 342–362 (IVFL…DQVV), 363–383 (TFSI…MVMF), and 403–423 (LPTV…FLGY).

This sequence belongs to the amino acid-polyamine-organocation (APC) superfamily.

The protein localises to the cell membrane. Its function is as follows. Probable amino-acid or metabolite transport protein. This is an uncharacterized protein from Rhizobium meliloti (strain 1021) (Ensifer meliloti).